The following is a 299-amino-acid chain: Putative ammonium transporter 4 member 1 (299 aa).

The next 5 helical transmembrane spans lie at 16-36 (AWPL…LVIL), 59-79 (VLLT…GFNG), 104-124 (LLVW…ISAV), 158-178 (VLHT…LLLL), and 218-238 (AGIA…CLAV).

Belongs to the ammonia transporter channel (TC 1.A.11.2) family.

It is found in the membrane. The sequence is that of Putative ammonium transporter 4 member 1 (AMT4-1) from Oryza sativa subsp. japonica (Rice).